Here is a 316-residue protein sequence, read N- to C-terminus: L-lactate dehydrogenase (316 aa).

Residues Val-15, Asp-37, Lys-42, Tyr-68, and 82-83 (GL) contribute to the NAD(+) site. Substrate is bound by residues Gln-85, Arg-91, and 123 to 126 (NPVD). NAD(+) contacts are provided by residues 121–123 (ASN) and Thr-146. Residue 151–154 (DTSR) participates in substrate binding. Residues Arg-156 and His-171 each contribute to the beta-D-fructose 1,6-bisphosphate site. The active-site Proton acceptor is His-178. At Tyr-222 the chain carries Phosphotyrosine. A substrate-binding site is contributed by Thr-231.

It belongs to the LDH/MDH superfamily. LDH family. Homotetramer.

It localises to the cytoplasm. It carries out the reaction (S)-lactate + NAD(+) = pyruvate + NADH + H(+). It participates in fermentation; pyruvate fermentation to lactate; (S)-lactate from pyruvate: step 1/1. With respect to regulation, allosterically activated by fructose 1,6-bisphosphate (FBP). In terms of biological role, catalyzes the conversion of lactate to pyruvate. This chain is L-lactate dehydrogenase, found in Borreliella afzelii (strain PKo) (Borrelia afzelii).